Consider the following 92-residue polypeptide: Co-chaperonin GroES (92 aa).

The protein belongs to the GroES chaperonin family. In terms of assembly, heptamer of 7 subunits arranged in a ring. Interacts with the chaperonin GroEL.

It is found in the cytoplasm. Functionally, together with the chaperonin GroEL, plays an essential role in assisting protein folding. The GroEL-GroES system forms a nano-cage that allows encapsulation of the non-native substrate proteins and provides a physical environment optimized to promote and accelerate protein folding. GroES binds to the apical surface of the GroEL ring, thereby capping the opening of the GroEL channel. This chain is Co-chaperonin GroES, found in Thermotoga petrophila (strain ATCC BAA-488 / DSM 13995 / JCM 10881 / RKU-1).